The primary structure comprises 290 residues: Elongation factor Ts (290 aa).

Positions Thr-82–Val-85 are involved in Mg(2+) ion dislocation from EF-Tu.

This sequence belongs to the EF-Ts family.

It localises to the cytoplasm. Its function is as follows. Associates with the EF-Tu.GDP complex and induces the exchange of GDP to GTP. It remains bound to the aminoacyl-tRNA.EF-Tu.GTP complex up to the GTP hydrolysis stage on the ribosome. The chain is Elongation factor Ts from Cellvibrio japonicus (strain Ueda107) (Pseudomonas fluorescens subsp. cellulosa).